A 493-amino-acid polypeptide reads, in one-letter code: Probable mannosyl-oligosaccharide alpha-1,2-mannosidase 1B (493 aa).

The N-terminal stretch at 1–18 (MHLPSLSVALALVSSSLA) is a signal peptide. Asparagine 87 and asparagine 174 each carry an N-linked (GlcNAc...) asparagine glycan. A disulfide bridge links cysteine 324 with cysteine 353. Glutamate 367 functions as the Proton donor in the catalytic mechanism. N-linked (GlcNAc...) asparagine glycosylation occurs at asparagine 489.

Belongs to the glycosyl hydrolase 47 family. In terms of assembly, monomer. The cofactor is Ca(2+). Requires Mg(2+) as cofactor.

It is found in the cytoplasmic vesicle lumen. The catalysed reaction is N(4)-(alpha-D-Man-(1-&gt;2)-alpha-D-Man-(1-&gt;2)-alpha-D-Man-(1-&gt;3)-[alpha-D-Man-(1-&gt;2)-alpha-D-Man-(1-&gt;3)-[alpha-D-Man-(1-&gt;2)-alpha-D-Man-(1-&gt;6)]-alpha-D-Man-(1-&gt;6)]-beta-D-Man-(1-&gt;4)-beta-D-GlcNAc-(1-&gt;4)-beta-D-GlcNAc)-L-asparaginyl-[protein] (N-glucan mannose isomer 9A1,2,3B1,2,3) + 4 H2O = N(4)-(alpha-D-Man-(1-&gt;3)-[alpha-D-Man-(1-&gt;3)-[alpha-D-Man-(1-&gt;6)]-alpha-D-Man-(1-&gt;6)]-beta-D-Man-(1-&gt;4)-beta-D-GlcNAc-(1-&gt;4)-beta-D-GlcNAc)-L-asparaginyl-[protein] (N-glucan mannose isomer 5A1,2) + 4 beta-D-mannose. It catalyses the reaction N(4)-(alpha-D-Man-(1-&gt;2)-alpha-D-Man-(1-&gt;2)-alpha-D-Man-(1-&gt;3)-[alpha-D-Man-(1-&gt;3)-[alpha-D-Man-(1-&gt;2)-alpha-D-Man-(1-&gt;6)]-alpha-D-Man-(1-&gt;6)]-beta-D-Man-(1-&gt;4)-beta-D-GlcNAc-(1-&gt;4)-beta-D-GlcNAc)-L-asparaginyl-[protein] (N-glucan mannose isomer 8A1,2,3B1,3) + 3 H2O = N(4)-(alpha-D-Man-(1-&gt;3)-[alpha-D-Man-(1-&gt;3)-[alpha-D-Man-(1-&gt;6)]-alpha-D-Man-(1-&gt;6)]-beta-D-Man-(1-&gt;4)-beta-D-GlcNAc-(1-&gt;4)-beta-D-GlcNAc)-L-asparaginyl-[protein] (N-glucan mannose isomer 5A1,2) + 3 beta-D-mannose. It participates in protein modification; protein glycosylation. In terms of biological role, involved in the maturation of Asn-linked oligosaccharides. Progressively trims alpha-1,2-linked mannose residues from Man(9)GlcNAc(2) to produce Man(5)GlcNAc(2). The polypeptide is Probable mannosyl-oligosaccharide alpha-1,2-mannosidase 1B (mns1B) (Aspergillus fumigatus (strain CBS 144.89 / FGSC A1163 / CEA10) (Neosartorya fumigata)).